The sequence spans 159 residues: Ribosomal RNA large subunit methyltransferase H (159 aa).

S-adenosyl-L-methionine is bound by residues leucine 76, glycine 108, and 127 to 132 (FSKMTF).

Belongs to the RNA methyltransferase RlmH family. In terms of assembly, homodimer.

The protein localises to the cytoplasm. The catalysed reaction is pseudouridine(1915) in 23S rRNA + S-adenosyl-L-methionine = N(3)-methylpseudouridine(1915) in 23S rRNA + S-adenosyl-L-homocysteine + H(+). Functionally, specifically methylates the pseudouridine at position 1915 (m3Psi1915) in 23S rRNA. In Staphylococcus haemolyticus (strain JCSC1435), this protein is Ribosomal RNA large subunit methyltransferase H.